The chain runs to 106 residues: Nucleoid-associated protein Nwi_0368 (106 aa).

It belongs to the YbaB/EbfC family. In terms of assembly, homodimer.

The protein localises to the cytoplasm. It is found in the nucleoid. Functionally, binds to DNA and alters its conformation. May be involved in regulation of gene expression, nucleoid organization and DNA protection. This Nitrobacter winogradskyi (strain ATCC 25391 / DSM 10237 / CIP 104748 / NCIMB 11846 / Nb-255) protein is Nucleoid-associated protein Nwi_0368.